The chain runs to 57 residues: Bowman-Birk type proteinase inhibitor B4 (57 aa).

Intrachain disulfides connect C6–C55, C12–C17, C26–C33, and C30–C47.

This sequence belongs to the Bowman-Birk serine protease inhibitor family. Expressed in bulb (at protein level).

Its function is as follows. Serine protease inhibitor. Inhibits trypsin (Ki = 110 nM) and very weakly inhibits chymotrypsin (Ki =1200 nM). Does not inhibit bacterial subtilisin. The protein is Bowman-Birk type proteinase inhibitor B4 of Hyacinthus orientalis (Common hyacinth).